We begin with the raw amino-acid sequence, 230 residues long: Ribonuclease 3 (230 aa).

Residues 10–133 (DPRLQSRIGY…IIGAIYVDSN (124 aa)) enclose the RNase III domain. Glu-46 contributes to the Mg(2+) binding site. Asp-50 is a catalytic residue. The Mg(2+) site is built by Asp-119 and Glu-122. The active site involves Glu-122. Residues 161-230 (DPKSRLQEYL…AAEILKLLEQ (70 aa)) form the DRBM domain.

Belongs to the ribonuclease III family. In terms of assembly, homodimer. Mg(2+) serves as cofactor.

It localises to the cytoplasm. The enzyme catalyses Endonucleolytic cleavage to 5'-phosphomonoester.. Digests double-stranded RNA. Involved in the processing of primary rRNA transcript to yield the immediate precursors to the large and small rRNAs (23S and 16S). Processes some mRNAs, and tRNAs when they are encoded in the rRNA operon. Processes pre-crRNA and tracrRNA of type II CRISPR loci if present in the organism. The sequence is that of Ribonuclease 3 from Acinetobacter baylyi (strain ATCC 33305 / BD413 / ADP1).